A 162-amino-acid polypeptide reads, in one-letter code: UPF0178 protein RSKD131_2223 (162 aa).

This sequence belongs to the UPF0178 family.

The sequence is that of UPF0178 protein RSKD131_2223 from Cereibacter sphaeroides (strain KD131 / KCTC 12085) (Rhodobacter sphaeroides).